The sequence spans 1177 residues: Phospholipid-transporting ATPase IF (1177 aa).

The Cytoplasmic portion of the chain corresponds to 1 to 55 (MWRWIRQQLGFDPPHQSDTRTIYVANRFPQNGLYTPQKFIDNRIISSKYTVWNFV). The helical transmembrane segment at 56–77 (PKNLFEQFRRVANFYFLIIFLV) threads the bilayer. Residues 78–82 (QLMID) are Extracellular-facing. A helical membrane pass occupies residues 83-104 (TPTSPVTSGLPLFFVITVTAIK). Topologically, residues 105-289 (QGYEDWLRHN…SAVEKSMNTF (185 aa)) are cytoplasmic. A helical membrane pass occupies residues 290–311 (LIIYLVILISEAVISTILKYTW). Residues 312–341 (QAEEKWDEPWYNQKTEHQRNSSKILRFISD) lie on the Extracellular side of the membrane. A helical membrane pass occupies residues 342-359 (FLAFLVLYNFIIPISLYV). Residues 360 to 876 (TVEMQKFLGS…HGHFYYIRIA (517 aa)) lie on the Cytoplasmic side of the membrane. Asp407 serves as the catalytic 4-aspartylphosphate intermediate. Residues Asp407, Lys408, Thr409, Glu531, Phe572, Lys595, Arg626, Thr706, Gly707, Asp708, Arg794, and Lys800 each coordinate ATP. Asp407 lines the Mg(2+) pocket. Thr409 provides a ligand contact to Mg(2+). A Mg(2+)-binding site is contributed by Asp821. Positions 824 and 825 each coordinate ATP. Asp825 provides a ligand contact to Mg(2+). A helical membrane pass occupies residues 877–898 (TLVQYFFYKNVCFITPQFLYQF). At 899–910 (YCLFSQQTLYDS) the chain is on the extracellular side. The helical transmembrane segment at 911 to 930 (VYLTLYNICFTSLPILIYSL) threads the bilayer. At 931–960 (LEQHVDPHVLQNKPTLYRDISKNRLLSIKT) the chain is on the cytoplasmic side. Residues 961 to 982 (FLYWTILGFSHAFIFFFGSYLL) form a helical membrane-spanning segment. At 983–997 (IGKDTSLLGNGQMFG) the chain is on the extracellular side. A helical membrane pass occupies residues 998 to 1020 (NWTFGTLVFTVMVITVTVKMALE). Residues 1021–1025 (THFWT) are Cytoplasmic-facing. The helical transmembrane segment at 1026–1047 (WINHLVTWGSIIFYFVFSLFYG) threads the bilayer. The Extracellular portion of the chain corresponds to 1048 to 1065 (GILWPFLGSQNMYFVFIQ). The helical transmembrane segment at 1066–1090 (LLSSGSAWFAIILMVVTCLFLDIIK) threads the bilayer. Over 1091–1177 (KVFDRHLHPT…TLSTMDSSTC (87 aa)) the chain is Cytoplasmic. Position 1154 is a phosphoserine (Ser1154).

Belongs to the cation transport ATPase (P-type) (TC 3.A.3) family. Type IV subfamily. As to quaternary structure, component of a P4-ATPase flippase complex which consists of a catalytic alpha subunit ATP11B and an accessory beta subunit TMEM30A. Mg(2+) serves as cofactor.

The protein localises to the recycling endosome membrane. It localises to the early endosome. The protein resides in the endoplasmic reticulum. Its subcellular location is the golgi apparatus. It is found in the trans-Golgi network. It carries out the reaction ATP + H2O + phospholipidSide 1 = ADP + phosphate + phospholipidSide 2.. It catalyses the reaction a 1,2-diacyl-sn-glycero-3-phospho-L-serine(out) + ATP + H2O = a 1,2-diacyl-sn-glycero-3-phospho-L-serine(in) + ADP + phosphate + H(+). The enzyme catalyses a 1,2-diacyl-sn-glycero-3-phosphoethanolamine(out) + ATP + H2O = a 1,2-diacyl-sn-glycero-3-phosphoethanolamine(in) + ADP + phosphate + H(+). With respect to regulation, the ATPase activity is up-regulated by aminophospholipids PS and PE. Functionally, catalytic component of a P4-ATPase flippase complex which catalyzes the hydrolysis of ATP coupled to the transport of aminophospholipids, phosphatidylserines (PS) and phosphatidylethanolamines (PE), from the outer to the inner leaflet of intracellular membranes. May contribute to the maintenance of membrane lipid asymmetry in endosome compartment. The polypeptide is Phospholipid-transporting ATPase IF (ATP11B) (Homo sapiens (Human)).